A 372-amino-acid chain; its full sequence is Glutamate 5-kinase (372 aa).

K14 contributes to the ATP binding site. S54, D141, and N153 together coordinate substrate. Position 173–174 (173–174) interacts with ATP; sequence TD. Residues 280-358 form the PUA domain; that stretch reads RGTLVLDAGA…DAIEKLLGYV (79 aa).

It belongs to the glutamate 5-kinase family.

It is found in the cytoplasm. It catalyses the reaction L-glutamate + ATP = L-glutamyl 5-phosphate + ADP. The protein operates within amino-acid biosynthesis; L-proline biosynthesis; L-glutamate 5-semialdehyde from L-glutamate: step 1/2. Catalyzes the transfer of a phosphate group to glutamate to form L-glutamate 5-phosphate. This Ectopseudomonas mendocina (strain ymp) (Pseudomonas mendocina) protein is Glutamate 5-kinase.